The chain runs to 1129 residues: MLEQAEKLMKRNSSGAMSAPQSKPLARSRSSTMPTTTQKRVRSSQQSEGEPEYNIKVYVRCRSRNEREIREKSSVVISTLGNNGREVILTNPGTGSNKTYTFDRVFGVESDQESMFNQVARAYINEMIEGYNCTVFAYGQTGTGKTYTMSGDITMMGSSEDDPNFVLLSEHAGIIPRVLVELFRELREVSEDYSVKVSFLELYNEKLRDLLVDDKDVSLEDHNFNGMAPPESIRIYDSLKTDRTSPNGYSIFVKGMEEMYIRSAQEGLKLLMDGSLKRKVAATKCNDLSSRSHTIFTITTNVTKIHPISGEQYVKVGKLNLVDLAGSENINRSGAENKRAQEAGLINKSLLTLGRVINALVDHSQHIPYRESKLTRLLQDSLGGKTKTCIIATISPAKISMEETVSTLEYATRAKSIKNTPQVNQLMAKESCIIEYIQEIERLRKELRASHSKEGIYITQEKFETYESNSILVEEQQAKIDNLQEQLRRLKEKFLEQTKLIKEKDGQIKELDVANRKYLEQSKDLTIYINGIHSKLEDYEHTMIGIHNNNMKLLEDINDNRGNIHEDLLAKVDHIETCNLIISREITSLISIRNVLQAYSDRFKTVLGGVFEELQEKLTQVGRTTEESQLDVDLSFVDEKFEEVTDIIKATCENLVRTMDEHVSNMKLETTDLTSSCASLLEKECQALHGKLQKYVESMKQELNSTLQEMVRDLDMKASSMLNVVQCTKDGLISHKKELEADLESQKREHFDIAQTMEEQLQKIVGKERQNIQESMKASYDFLMKQMVETELRQKNFEESIVSKVKGLLSHSNNGMSKMSSYAVGRLYDSAIGGVNSIENTVSSATFSMKNDLQEFQMDISPICDSRRFGDEFTAVETRISEAIREELTPKLQDITSKACNLIGLGVQDINQKALGVSDDQRRELRSVINNTNNHADRLRSEIGTLVNYVSQEHRDNIMQISQTQDEILQEQIASIGRTFDVLGNINKPDANVRTSVPIEHELNSAINELPPLYMPQRPLSLCSHGRQLLDEAYSGNENLSPSTGKFSNFPTPCGDMSAQTPTTPMPVPDQPLTKMPVPQTISSLRSLRRLTMDICEHSADMTLGSIHESQKAMDSSRRYTLEPRLFEK.

The segment at 1-49 is disordered; it reads MLEQAEKLMKRNSSGAMSAPQSKPLARSRSSTMPTTTQKRVRSSQQSEG. 2 stretches are compositionally biased toward polar residues: residues 11-21 and 28-48; these read RNSSGAMSAPQ and SRSS…QQSE. The Kinesin motor domain maps to 54 to 417; it reads NIKVYVRCRS…LEYATRAKSI (364 aa). 139-146 lines the ATP pocket; it reads GQTGTGKT. Coiled coils occupy residues 422 to 513, 681 to 765, and 919 to 948; these read QVNQ…ELDV, LEKE…QKIV, and DDQR…TLVN.

Belongs to the TRAFAC class myosin-kinesin ATPase superfamily. Kinesin family. BimC subfamily.

Its subcellular location is the cytoplasm. The protein localises to the cytoskeleton. It localises to the spindle. Its function is as follows. Required for assembly of the mitotic spindle. Interacts with spindle microtubules to produce an outwardly directed force acting upon the poles. Following spindle assembly, CIN8 and KIP1 apparently act to oppose a force that draws separated poles back together. This force seems to be mediate by KAR3. The protein is Kinesin-like protein KIP1 (KIP1) of Eremothecium gossypii (strain ATCC 10895 / CBS 109.51 / FGSC 9923 / NRRL Y-1056) (Yeast).